Reading from the N-terminus, the 362-residue chain is Phosphoserine aminotransferase (362 aa).

2 residues coordinate L-glutamate: S9 and R42. Pyridoxal 5'-phosphate contacts are provided by residues 76–77 (GR), W102, T153, D174, and Q197. K198 carries the post-translational modification N6-(pyridoxal phosphate)lysine. A pyridoxal 5'-phosphate-binding site is contributed by 239 to 240 (NT).

The protein belongs to the class-V pyridoxal-phosphate-dependent aminotransferase family. SerC subfamily. Homodimer. The cofactor is pyridoxal 5'-phosphate.

It is found in the cytoplasm. The catalysed reaction is O-phospho-L-serine + 2-oxoglutarate = 3-phosphooxypyruvate + L-glutamate. It carries out the reaction 4-(phosphooxy)-L-threonine + 2-oxoglutarate = (R)-3-hydroxy-2-oxo-4-phosphooxybutanoate + L-glutamate. Its pathway is amino-acid biosynthesis; L-serine biosynthesis; L-serine from 3-phospho-D-glycerate: step 2/3. It participates in cofactor biosynthesis; pyridoxine 5'-phosphate biosynthesis; pyridoxine 5'-phosphate from D-erythrose 4-phosphate: step 3/5. In terms of biological role, catalyzes the reversible conversion of 3-phosphohydroxypyruvate to phosphoserine and of 3-hydroxy-2-oxo-4-phosphonooxybutanoate to phosphohydroxythreonine. Is involved in both pyridoxine and serine biosynthesis. The polypeptide is Phosphoserine aminotransferase (serC) (Escherichia coli (strain K12)).